The sequence spans 305 residues: Peroxisome assembly protein 26 (305 aa).

The interval 1 to 20 (MKSDSSTSAAPLRGLGGPLR) is disordered. Residues 1–246 (MKSDSSTSAA…RQLWDSAVSH (246 aa)) are Cytoplasmic-facing. Residues 247 to 267 (FFSLPFKKSLLAALILCLLVV) form a helical; Signal-anchor for type II membrane protein membrane-spanning segment. Residues 268–305 (RFDPASPSSLHFLYKLAQLFRWIRKAAFSRLYQLRIRD) lie on the Peroxisomal matrix side of the membrane.

The protein belongs to the peroxin-26 family. In terms of assembly, interacts (via its cytoplasmic domain) with PEX6; interaction is direct and is ATP-dependent. Interacts with PEX1; interaction is indirect and is mediated via interaction with PEX6. Widely expressed. Highly expressed in kidney, liver, brain and skeletal muscles. Expressed at intermediate level in pancreas, placenta and heart. Weakly expressed in lung.

Its subcellular location is the peroxisome membrane. Its function is as follows. Peroxisomal docking factor that anchors PEX1 and PEX6 to peroxisome membranes. PEX26 is therefore required for the formation of the PEX1-PEX6 AAA ATPase complex, a complex that mediates the extraction of the PEX5 receptor from peroxisomal membrane. This is Peroxisome assembly protein 26 from Homo sapiens (Human).